A 267-amino-acid polypeptide reads, in one-letter code: Small ribosomal subunit protein uS2c (267 aa).

The tract at residues 237 to 267 (KQKIKKTGVKISGNRRTSSITKKRNPASSKI) is disordered. Over residues 250 to 267 (NRRTSSITKKRNPASSKI) the composition is skewed to polar residues.

The protein belongs to the universal ribosomal protein uS2 family.

It localises to the plastid. It is found in the chloroplast. The protein is Small ribosomal subunit protein uS2c (rps2) of Chlorella vulgaris (Green alga).